The following is a 130-amino-acid chain: Small ribosomal subunit protein uS9 (130 aa).

It belongs to the universal ribosomal protein uS9 family.

The sequence is that of Small ribosomal subunit protein uS9 from Pseudomonas putida (strain W619).